The primary structure comprises 196 residues: Ribosome maturation factor RimP (196 aa).

A disordered region spans residues 163-196 (GLAPSKPTGPAPKRPKPNTNSSSNEPAAKKPRAE).

Belongs to the RimP family.

It localises to the cytoplasm. Functionally, required for maturation of 30S ribosomal subunits. This chain is Ribosome maturation factor RimP, found in Stenotrophomonas maltophilia (strain K279a).